Consider the following 46-residue polypeptide: uncharacterized protein (46 aa).

It localises to the plastid. It is found in the chloroplast. This is an uncharacterized protein from Trieres chinensis (Marine centric diatom).